The chain runs to 464 residues: Zinc transporter 6-A (464 aa).

At 1-33 (MGTIYLFRKTQRSLLGKLAQEFRLVTADRRSWK) the chain is on the cytoplasmic side. A helical transmembrane segment spans residues 34 to 54 (ILLFGAINVVCTAFLLTWCSS). The Extracellular portion of the chain corresponds to 55–64 (TNSMALTAYT). Residues 65–85 (YLTIFDLFSLITSLISYWVTM) form a helical membrane-spanning segment. The Cytoplasmic portion of the chain corresponds to 86–98 (KKPSPTYSFGFER). The chain crosses the membrane as a helical span at residues 99-119 (FEVLAVFASTVLAQLGALFIL). Over 120-134 (KESAERFIEQPEIHT) the chain is Extracellular. The helical transmembrane segment at 135–155 (GRLLVGTFVALFFNLFTMLSI) threads the bilayer. Topologically, residues 156 to 200 (RNKPFAYVSDAASTSWLQEHVADLSRSLCGIIPGLSSIFLPRMNP) are cytoplasmic. A helical membrane pass occupies residues 201-221 (FVLIDIAGALALCITYMLIEI). Residues 222 to 223 (NN) are Extracellular-facing. Residues 224-244 (YFAVDTASAVAIAVMTFGTMY) traverse the membrane as a helical segment. Residues 245-464 (PMSVYSGKVL…TPGQFTQFRQ (220 aa)) lie on the Cytoplasmic side of the membrane.

The protein belongs to the cation diffusion facilitator (CDF) transporter (TC 2.A.4) family. SLC30A subfamily. Heterodimer with SLC30A5; form a functional zinc ion transmembrane transporter.

It localises to the golgi apparatus. The protein resides in the trans-Golgi network membrane. In terms of biological role, has probably no intrinsic transporter activity but together with SLC30A5 forms a functional zinc ion:proton antiporter heterodimer, mediating zinc entry into the lumen of organelles along the secretory pathway. As part of that zinc ion:proton antiporter, contributes to zinc ion homeostasis within the early secretory pathway and regulates the activation and folding of enzymes like alkaline phosphatases and enzymes involved in phosphatidylinositol glycan anchor biosynthesis. This chain is Zinc transporter 6-A (slc30a6-a), found in Xenopus laevis (African clawed frog).